The primary structure comprises 172 residues: Disulfide bond formation protein B (172 aa).

Topologically, residues 1-11 are cytoplasmic; that stretch reads MNPFRWSFRAQ. Residues 12–28 form a helical membrane-spanning segment; that stretch reads FLLGFLACAGLLAYAIY. Residues 29-46 are Periplasmic-facing; it reads VQLHLGLEPCPLCIFQRI. A disulfide bridge links Cys38 with Cys41. A helical membrane pass occupies residues 47-63; the sequence is AFAALAVFFLLGALHGP. The Cytoplasmic segment spans residues 64 to 70; the sequence is RAAAGRK. Residues 71-88 traverse the membrane as a helical segment; sequence VYGVLSFIAAGVGMGIAA. Over 89–145 the chain is Periplasmic; that stretch reads RHVWVQIRPKDMMSSCGPPLSFLSETMGPFEVFRTVLTGTGDCGNIDWRFLGLSMPM. Cys104 and Cys131 are disulfide-bonded. A helical transmembrane segment spans residues 146 to 164; it reads WSMVWFVGLALWALYAGFK. Topologically, residues 165-172 are cytoplasmic; it reads VRRSSVHH.

Belongs to the DsbB family.

Its subcellular location is the cell inner membrane. Required for disulfide bond formation in some periplasmic proteins. Acts by oxidizing the DsbA protein. In Xanthomonas axonopodis pv. citri (strain 306), this protein is Disulfide bond formation protein B.